The chain runs to 906 residues: MITGLITKIIGSRNDRYLKKLRKVADEINKLEPQMKALSDEELKAKTIEFKERLASGESLDKILVEAFAVVRNASERVFGMRQFDVQLIGGMVLNDNKIAEMRTGEGKTLTATLPAYLNALSGKGVHIITVNDYLAGRDAKWNAKLFEFLGLTVGINISGMSGDQKRAAYAADITYGTNNEFGFDYLRDNMAFEAQQRVMRSLHYAIIDEVDSILIDEARTPLIISGPTDGDATLYTELNTVIPMLTQQDKEDTEEYIGEGDFTVDEKNKQVLLTERGQEKVEVILQERGLLDENQSLYSAASISLLHHVNAALRAHTLFEKDVEYIVTEKGEVVIVDEHSGRTMPGRRWSEGLHQAVEAKEGVQIQNENQTLASITFQNYFRLYEKLAGMTGTADTEAFEFQSIYGLETIVIPTNQAMIRKDGGDLVYLTEQEKYQAIVDDIKPRLEKGQPILVGTVSIEHSELLSDLMDKAKIKHSVLNAKFHAKEADIIAQAGALGSVTIATNMAGRGTDIVLGGNLEARLDKLGDVSPKEIEAEKELWKEEHKKVLKAGGLYIVGTERHESRRIDNQLRGRSGRQGDPGESRFYLSMEDSLMRIFASEKVSNMMKKLGMEKGEAIEHPWVSRAIENAQRKVEGRNFDMRKSLLDFDDVSNEQRKVIYQQRNGVIDSEEITETIEQIWDDVFHNCVNEYVPPHSLTEQWDLEGLEQRLKADFLVDLPVRQWSIDDANLQEGSIREKVVEHAKASYLAKKEQVGPAIIGSFEKSVMLQTIDTLWKEHLAAMDHLRQGIHLRGYAQKDPKQEYKRESFELFLQMLENLKREVVVILSKVQVQSKEEADVIQEQRRQAEAKAQLEMKHAQVNKGEVVSDENTGDDTFVRNEKKVGRNEPCPCGSGKKYKQCHGKLD.

ATP is bound by residues Q87, 105-109 (GEGKT), and D513. The tract at residues 860–906 (QVNKGEVVSDENTGDDTFVRNEKKVGRNEPCPCGSGKKYKQCHGKLD) is disordered. Basic and acidic residues predominate over residues 876–886 (TFVRNEKKVGR). Residues C890, C892, C901, and H902 each contribute to the Zn(2+) site. Over residues 896 to 906 (KKYKQCHGKLD) the composition is skewed to basic residues.

This sequence belongs to the SecA family. In terms of assembly, monomer and homodimer. Part of the essential Sec protein translocation apparatus which comprises SecA, SecYEG and auxiliary proteins SecDF-YajC and YidC. Zn(2+) is required as a cofactor.

The protein localises to the cell inner membrane. Its subcellular location is the cytoplasm. The enzyme catalyses ATP + H2O + cellular proteinSide 1 = ADP + phosphate + cellular proteinSide 2.. In terms of biological role, part of the Sec protein translocase complex. Interacts with the SecYEG preprotein conducting channel. Has a central role in coupling the hydrolysis of ATP to the transfer of proteins into and across the cell membrane, serving both as a receptor for the preprotein-SecB complex and as an ATP-driven molecular motor driving the stepwise translocation of polypeptide chains across the membrane. The sequence is that of Protein translocase subunit SecA from Psychromonas ingrahamii (strain DSM 17664 / CCUG 51855 / 37).